The sequence spans 255 residues: Probable transcriptional regulatory protein CMM_1817 (255 aa).

Belongs to the TACO1 family.

The protein resides in the cytoplasm. The chain is Probable transcriptional regulatory protein CMM_1817 from Clavibacter michiganensis subsp. michiganensis (strain NCPPB 382).